Reading from the N-terminus, the 200-residue chain is dITP/XTP pyrophosphatase (200 aa).

8–13 (SQNSSK) serves as a coordination point for substrate. Mg(2+)-binding residues include E40 and D69. The active-site Proton acceptor is the D69. Residues S70, 154–157 (FGYD), K177, and 182–183 (HR) each bind substrate.

Belongs to the HAM1 NTPase family. As to quaternary structure, homodimer. Mg(2+) is required as a cofactor.

The enzyme catalyses XTP + H2O = XMP + diphosphate + H(+). The catalysed reaction is dITP + H2O = dIMP + diphosphate + H(+). It catalyses the reaction ITP + H2O = IMP + diphosphate + H(+). Functionally, pyrophosphatase that catalyzes the hydrolysis of nucleoside triphosphates to their monophosphate derivatives, with a high preference for the non-canonical purine nucleotides XTP (xanthosine triphosphate), dITP (deoxyinosine triphosphate) and ITP. Seems to function as a house-cleaning enzyme that removes non-canonical purine nucleotides from the nucleotide pool, thus preventing their incorporation into DNA/RNA and avoiding chromosomal lesions. This is dITP/XTP pyrophosphatase from Coxiella burnetii (strain RSA 493 / Nine Mile phase I).